A 427-amino-acid chain; its full sequence is 3-phosphoshikimate 1-carboxyvinyltransferase (427 aa).

3-phosphoshikimate is bound by residues lysine 22, serine 23, and arginine 27. Lysine 22 is a binding site for phosphoenolpyruvate. Residues glycine 96 and arginine 124 each contribute to the phosphoenolpyruvate site. The 3-phosphoshikimate site is built by serine 169, serine 170, glutamine 171, serine 197, aspartate 313, asparagine 336, and lysine 340. Glutamine 171 lines the phosphoenolpyruvate pocket. Aspartate 313 (proton acceptor) is an active-site residue. Residues arginine 344, arginine 386, and lysine 411 each coordinate phosphoenolpyruvate.

The protein belongs to the EPSP synthase family. Monomer.

It localises to the cytoplasm. It catalyses the reaction 3-phosphoshikimate + phosphoenolpyruvate = 5-O-(1-carboxyvinyl)-3-phosphoshikimate + phosphate. It functions in the pathway metabolic intermediate biosynthesis; chorismate biosynthesis; chorismate from D-erythrose 4-phosphate and phosphoenolpyruvate: step 6/7. Functionally, catalyzes the transfer of the enolpyruvyl moiety of phosphoenolpyruvate (PEP) to the 5-hydroxyl of shikimate-3-phosphate (S3P) to produce enolpyruvyl shikimate-3-phosphate and inorganic phosphate. This chain is 3-phosphoshikimate 1-carboxyvinyltransferase, found in Escherichia coli O127:H6 (strain E2348/69 / EPEC).